Here is a 147-residue protein sequence, read N- to C-terminus: 3-dehydroquinate dehydratase (147 aa).

The Proton acceptor role is filled by Y23. Positions 74, 80, and 87 each coordinate substrate. The active-site Proton donor is H100. Substrate is bound by residues 101–102 and R111; that span reads IS.

Belongs to the type-II 3-dehydroquinase family. Homododecamer.

It carries out the reaction 3-dehydroquinate = 3-dehydroshikimate + H2O. It functions in the pathway metabolic intermediate biosynthesis; chorismate biosynthesis; chorismate from D-erythrose 4-phosphate and phosphoenolpyruvate: step 3/7. Catalyzes a trans-dehydration via an enolate intermediate. The protein is 3-dehydroquinate dehydratase of Prochlorococcus marinus (strain MIT 9301).